Consider the following 238-residue polypeptide: Ribosomal RNA small subunit methyltransferase G (238 aa).

S-adenosyl-L-methionine-binding positions include G77, F82, 128 to 129, and R147; that span reads AE. The segment at 219-238 is disordered; the sequence is KETPNKYPRKPGTPNKLPIE.

It belongs to the methyltransferase superfamily. RNA methyltransferase RsmG family.

The protein resides in the cytoplasm. Its function is as follows. Specifically methylates the N7 position of guanine in position 535 of 16S rRNA. This Listeria monocytogenes serovar 1/2a (strain ATCC BAA-679 / EGD-e) protein is Ribosomal RNA small subunit methyltransferase G.